The primary structure comprises 1027 residues: YRAGPRYIQAQVGPIGPRGPPGPPGSPGQQGYQGLRGEPGDSGPMGPIGKRGPPGPAGIAGKSGDDGRDGEPGPRGGIGPMGPRGAGGMPGMPGPKGHRGFRGLSGSKGEQGKSGNQGPDGGPGPAGPSGPIGPRGQTGERGRDGKSGLPGLRGVDGLAGPPGPPGPIGSTGSPGFPGTPGSKGDRGQSGIKGAQGLQGPVGLSGQPGVAGENGHPGMPGMDGANGEPGASGESGLPGPSGFPGPRGMPGTAGSPGQAGAKGDGGPTGEQGRPGAPGVKGSSGPPGDVGAPGHAGEAGKRGSPGSPGPAGSPGPQGDRGLPGSRGLPGMTGASGAMGIPGEKGPSGEPGAKGPTGDTGRQGNQGTPGIAGLPGNPGSDGRPGKDGRPGIRGKDGKQGEQGPQGPQGLAGLQGRAGPPGARGEPGKNGAPGEPGAHGEQGDAGKDGETGAAGPPGAAGPTGARGPPGPRGQQGFQGLAGAQGTPGEAGKTGERGAVGATGPSGPAGPGGERGAPGDRGNVGPRGMPGERGATGPAGPTGSPGVAGAKGQGGPPGPAGLVGLPGERGPKGVGGSKGSRGDIGPRGKAGERGKDGERGERGENGLPGPSGLAASKGERGDMGSPGERGSPGPAGERGPAGSQGIQGQPGPPGDAGPAGTKGDIGFPGERGTRGATGKQGARGPRGLAGKRGLRGAGGSRGETGAQGEIGLPGSPGQPGLPGPSGQPGPSGPAGTAGKQGVKGARGSPGLVGKQGDRGSDGEPGRDGTKGERGEDGPPGVSGPTGAPGQQGERGMPGMVGLRGETGPMGGQGMKGDGGPPGPSGDRGERGNAGPQGPTGPSGQAGAPGQEGAPGKDGLPGLAGRPGERGEPGVAGRAGSQGLAGLMGQRGLPGAAGPPGDRGERGEPGGQGVQGPVGAPGSQGPAGIMGMKGEAGGKGAKGDKGWTGLPGLQGLQGTPGHSGESGPPGAPGPRGARGEAGGRGSQGPPGKDGQPGPSGRVGPRGPSGDDGRSGPPGPPGPPGPPGNSDYGA.

Residues 1–12 (YRAGPRYIQAQV) are nonhelical region (N-terminal). The disordered stretch occupies residues 1–1027 (YRAGPRYIQA…GPPGNSDYGA (1027 aa)). The segment at 13 to 1023 (GPIGPRGPPG…PGPPGPPGNS (1011 aa)) is triple-helical region. The segment covering 17–26 (PRGPPGPPGS) has biased composition (pro residues). 4-hydroxyproline; partial is present on residues Pro-21 and Pro-24. 4-hydroxyproline occurs at positions 27 and 39. Pro-53 is modified (3-hydroxyproline; partial). 4-hydroxyproline is present on Pro-54. Positions 63-72 (SGDDGRDGEP) are enriched in basic and acidic residues. Pro-72 is subject to 4-hydroxyproline; partial. Over residues 73–91 (GPRGGIGPMGPRGAGGMPG) the composition is skewed to gly residues. Pro-90 and Pro-93 each carry 4-hydroxyproline. Residues Lys-96 and Lys-108 each carry the 5-hydroxylysine modification. O-linked (Gal...) hydroxylysine glycans are attached at residues Lys-96 and Lys-108. A 4-hydroxyproline; partial mark is found at Pro-123 and Pro-128. 4-hydroxyproline is present on Pro-150. Pro-161 is modified (3-hydroxyproline; partial). 4-hydroxyproline is present on Pro-162. The residue at position 164 (Pro-164) is a 3-hydroxyproline; partial. 4 positions are modified to 4-hydroxyproline: Pro-165, Pro-174, Pro-177, and Pro-180. The segment covering 168–182 (IGSTGSPGFPGTPGS) has biased composition (low complexity). 5-hydroxylysine occurs at positions 183 and 192. An O-linked (Gal...) hydroxylysine glycan is attached at Lys-192. Pro-207, Pro-216, Pro-219, Pro-228, and Pro-237 each carry 4-hydroxyproline. Over residues 227-249 (EPGASGESGLPGPSGFPGPRGMP) the composition is skewed to low complexity. At Pro-243 the chain carries 4-hydroxyproline; partial. Pro-249 and Pro-255 each carry 4-hydroxyproline. Over residues 259–268 (GAKGDGGPTG) the composition is skewed to gly residues. A 5-hydroxylysine modification is found at Lys-261. O-linked (Gal...) hydroxylysine glycosylation is present at Lys-261. A 4-hydroxyproline; partial mark is found at Pro-273 and Pro-276. A 5-hydroxylysine modification is found at Lys-279. O-linked (Gal...) hydroxylysine glycosylation occurs at Lys-279. 3 positions are modified to 4-hydroxyproline; partial: Pro-285, Pro-291, and Pro-303. 5 positions are modified to 4-hydroxyproline: Pro-306, Pro-312, Pro-321, Pro-327, and Pro-339. Lys-342 is subject to 5-hydroxylysine. Residue Pro-348 is modified to 4-hydroxyproline; partial. A 5-hydroxylysine; partial modification is found at Lys-351. A 4-hydroxyproline mark is found at Pro-366, Pro-372, and Pro-375. A compositionally biased stretch (basic and acidic residues) spans 380 to 396 (RPGKDGRPGIRGKDGKQ). Position 381 is a 4-hydroxyproline; partial (Pro-381). Pro-387 carries the post-translational modification 4-hydroxyproline. Residues 398–420 (EQGPQGPQGLAGLQGRAGPPGAR) show a composition bias toward low complexity. Pro-416 is subject to 3-hydroxyproline; partial. 4-hydroxyproline is present on residues Pro-417, Pro-423, Pro-429, and Pro-432. Over residues 437–446 (EQGDAGKDGE) the composition is skewed to basic and acidic residues. A compositionally biased stretch (low complexity) spans 447–480 (TGAAGPPGAAGPTGARGPPGPRGQQGFQGLAGAQ). 4-hydroxyproline is present on residues Pro-453, Pro-465, and Pro-483. 4-hydroxyproline; partial is present on residues Pro-500, Pro-503, and Pro-506. Residues 502–511 (GPAGPGGERG) show a composition bias toward gly residues. 2 positions are modified to 4-hydroxyproline: Pro-513 and Pro-525. A compositionally biased stretch (low complexity) spans 527–543 (ERGATGPAGPTGSPGVA). Pro-533 and Pro-536 each carry 4-hydroxyproline; partial. Pro-540 is modified (4-hydroxyproline). Position 546 is a 5-hydroxylysine (Lys-546). Pro-551 carries the 3-hydroxyproline; partial modification. 4-hydroxyproline is present on residues Pro-552 and Pro-561. 5-hydroxylysine is present on residues Lys-567 and Lys-573. Lys-573 carries O-linked (Gal...) hydroxylysine glycosylation. Residues 575–599 (SRGDIGPRGKAGERGKDGERGERGE) show a composition bias toward basic and acidic residues. Pro-603 is subject to 4-hydroxyproline. Lys-612 carries the post-translational modification 5-hydroxylysine. O-linked (Gal...) hydroxylysine glycosylation is present at Lys-612. Residue Pro-621 is modified to 4-hydroxyproline; partial. A 4-hydroxyproline modification is found at Pro-627. Residues 635–644 (PAGSQGIQGQ) show a composition bias toward low complexity. Position 645 is a 4-hydroxyproline; partial (Pro-645). A 3-hydroxyproline; partial modification is found at Pro-647. At Pro-648 the chain carries 4-hydroxyproline. Lys-657 bears the 5-hydroxylysine mark. O-linked (Gal...) hydroxylysine glycosylation occurs at Lys-657. Residues Pro-663, Pro-708, Pro-711, Pro-714, Pro-717, and Pro-723 each carry the 4-hydroxyproline modification. A compositionally biased stretch (low complexity) spans 698-710 (ETGAQGEIGLPGS). Over residues 714–726 (PGLPGPSGQPGPS) the composition is skewed to pro residues. A 5-hydroxylysine modification is found at Lys-738. Lys-738 is a glycosylation site (O-linked (Gal...) hydroxylysine). Residues Pro-744 and Pro-759 each carry the 4-hydroxyproline modification. The span at 750-771 (QGDRGSDGEPGRDGTKGERGED) shows a compositional bias: basic and acidic residues. At Lys-765 the chain carries 5-hydroxylysine. The O-linked (Gal...) hydroxylysine glycan is linked to Lys-765. At Pro-773 the chain carries 3-hydroxyproline; partial. 3 positions are modified to 4-hydroxyproline: Pro-774, Pro-783, and Pro-792. The segment covering 802-814 (GPMGGQGMKGDGG) has biased composition (gly residues). 5-hydroxylysine is present on Lys-810. The O-linked (Gal...) hydroxylysine glycan is linked to Lys-810. Pro-815 is subject to 3-hydroxyproline; partial. Residues Pro-816, Pro-843, Pro-849, Pro-855, Pro-861, Pro-867, Pro-888, Pro-894, Pro-903, and Pro-915 each carry the 4-hydroxyproline modification. Low complexity predominate over residues 828–848 (AGPQGPTGPSGQAGAPGQEGA). Over residues 884–894 (QRGLPGAAGPP) the composition is skewed to low complexity. The span at 911-927 (PVGAPGSQGPAGIMGMK) shows a compositional bias: low complexity. Lys-927 is subject to 5-hydroxylysine. An O-linked (Gal...) hydroxylysine glycan is attached at Lys-927. 5-hydroxylysine; partial is present on Lys-933. 5-hydroxylysine is present on residues Lys-936 and Lys-939. Residue Lys-936 is glycosylated (O-linked (Gal...) hydroxylysine). Residues 942–962 (TGLPGLQGLQGTPGHSGESGP) show a composition bias toward low complexity. At Pro-945 the chain carries 4-hydroxyproline. Pro-954 carries the 4-hydroxyproline; partial modification. A 4-hydroxyproline mark is found at Pro-963 and Pro-966. The segment covering 973–982 (GEAGGRGSQG) has biased composition (gly residues). Residues 983–1001 (PPGKDGQPGPSGRVGPRGP) show a composition bias toward low complexity. A 4-hydroxyproline mark is found at Pro-984 and Pro-990. Pro-1010 is subject to 3-hydroxyproline; partial. Positions 1010 to 1020 (PPGPPGPPGPP) are enriched in pro residues. At Pro-1011 the chain carries 4-hydroxyproline. Pro-1013 carries the post-translational modification 3-hydroxyproline; partial. Pro-1014 is modified (4-hydroxyproline). Pro-1016 carries the 3-hydroxyproline; partial modification. At Pro-1017 the chain carries 4-hydroxyproline. 3-hydroxyproline; partial is present on Pro-1019. Pro-1020 carries the post-translational modification 4-hydroxyproline. The interval 1024–1027 (DYGA) is nonhelical region (C-terminal).

As to quaternary structure, homotetramer.

The protein resides in the secreted. The protein localises to the extracellular space. Its subcellular location is the extracellular matrix. Functionally, fibril-forming collagen. In Riftia pachyptila (Vent tube worm), this protein is Fibril-forming collagen alpha chain.